A 270-amino-acid chain; its full sequence is Phosphatidylglycerol--prolipoprotein diacylglyceryl transferase (270 aa).

Helical transmembrane passes span 19–39 (FPVY…LWLA), 56–76 (LVLI…VIFE), 92–112 (QGGL…ILFA), and 116–136 (GVSF…GQAI). Arg138 is an a 1,2-diacyl-sn-glycero-3-phospho-(1'-sn-glycerol) binding site. The next 3 helical transmembrane spans lie at 178–198 (HPTF…LLAL), 206–226 (GELF…VEGL), and 236–256 (LRIA…FIIV).

It belongs to the Lgt family.

The protein resides in the cell membrane. It catalyses the reaction L-cysteinyl-[prolipoprotein] + a 1,2-diacyl-sn-glycero-3-phospho-(1'-sn-glycerol) = an S-1,2-diacyl-sn-glyceryl-L-cysteinyl-[prolipoprotein] + sn-glycerol 1-phosphate + H(+). It functions in the pathway protein modification; lipoprotein biosynthesis (diacylglyceryl transfer). In terms of biological role, catalyzes the transfer of the diacylglyceryl group from phosphatidylglycerol to the sulfhydryl group of the N-terminal cysteine of a prolipoprotein, the first step in the formation of mature lipoproteins. The polypeptide is Phosphatidylglycerol--prolipoprotein diacylglyceryl transferase (Bacillus cereus (strain ZK / E33L)).